Reading from the N-terminus, the 716-residue chain is MFTPTICRFDYGQLKVTIETGMMARQATAAVMVIIEGTAVLVTVVAQKEAKPGQTFFPLSVHYQERSYAVGRIPSNFFRRETRPNEGETLTSRLIDRPIRPLFPKDFLNEVQVIATVVSVNPKVNPDIVAMIGASAVLSLSGIPFHEPIGAARVGFINGAYVLNPTPEELKQSDLNLVVAGTKNAVLMVESEANILTEEQMLGAIIFGHEQQQIVIESINDLVKKAGKLKWPFTPKIVDEKLRSCITEEDKKDLSNAYLITDKQERYAKLNEIKTNIIERILKENETVNAEQIQDILYNFEKNLVRQRILKDEPRIDGRDKDMIRALHACTGILPRTHGSALFTRGETQALVTTTLGTSRDLQTIDDLMGERSDSFLFHYNFPPYSVGETGMLGSPKRREIGHARLAKRALMAVMPNIEEFPYTVRVVSEITESNGSSSMASVCGASLALMDAGVPIKSAVAGIAMGLVKEEDKFVVLSDILGDEDHLGDMDFKVAGTSEGITALQMDMKIQGITPEIMQSALHHAKAARLHILSVMNQVISSASSTISQYAPHIYNIKINPEKIKDVIGKGGAVIRALSDETDTKIDISDDGNITIAALSQKSAAFAQQRIEEITANIEVGRIYQGTVTRIADYGAFVSIASAKEGLVHISQIAEGRVEKVTDHLKLKQQVSVKVLEIDRQGRIRLSIKDAIADTSEHKIEDTPVDSSFEESQKQ.

2 residues coordinate Mg(2+): aspartate 486 and aspartate 492. The region spanning 553–612 (PHIYNIKINPEKIKDVIGKGGAVIRALSDETDTKIDISDDGNITIAALSQKSAAFAQQRI) is the KH domain. In terms of domain architecture, S1 motif spans 622 to 690 (GRIYQGTVTR…RQGRIRLSIK (69 aa)).

Belongs to the polyribonucleotide nucleotidyltransferase family. In terms of assembly, component of the RNA degradosome, which is a multiprotein complex involved in RNA processing and mRNA degradation. Requires Mg(2+) as cofactor.

The protein localises to the cytoplasm. It carries out the reaction RNA(n+1) + phosphate = RNA(n) + a ribonucleoside 5'-diphosphate. Its function is as follows. Involved in mRNA degradation. Catalyzes the phosphorolysis of single-stranded polyribonucleotides processively in the 3'- to 5'-direction. This is Polyribonucleotide nucleotidyltransferase from Hamiltonella defensa subsp. Acyrthosiphon pisum (strain 5AT).